The chain runs to 209 residues: Ribonuclease HII (209 aa).

The RNase H type-2 domain occupies 18 to 209; the sequence is GLIAGVDEVG…FKPVKALLEG (192 aa). Residues D24, E25, and D116 each contribute to the a divalent metal cation site.

This sequence belongs to the RNase HII family. It depends on Mn(2+) as a cofactor. Mg(2+) serves as cofactor.

It localises to the cytoplasm. It carries out the reaction Endonucleolytic cleavage to 5'-phosphomonoester.. Endonuclease that specifically degrades the RNA of RNA-DNA hybrids. This is Ribonuclease HII from Shewanella putrefaciens (strain CN-32 / ATCC BAA-453).